The following is a 985-amino-acid chain: UPF0182 protein Cgl0786/cg0896 (985 aa).

The next 7 membrane-spanning stretches (helical) occupy residues 19-39 (VTWI…SVGF), 63-83 (IVLF…AGYF), 115-135 (VMVI…QRSW), 176-196 (SMML…MGGI), 215-235 (TQLA…YWLD), 262-282 (KIIL…AIFL), and 290-310 (LAVV…PLML). Positions 904-944 (KEAQDIEEVDGTATTPSTDETDTDTDQPATETPTAPVSEAE) are disordered. Positions 929–939 (DQPATETPTAP) are enriched in low complexity.

The protein belongs to the UPF0182 family.

It localises to the cell membrane. The protein is UPF0182 protein Cgl0786/cg0896 of Corynebacterium glutamicum (strain ATCC 13032 / DSM 20300 / JCM 1318 / BCRC 11384 / CCUG 27702 / LMG 3730 / NBRC 12168 / NCIMB 10025 / NRRL B-2784 / 534).